We begin with the raw amino-acid sequence, 187 residues long: MVAAARVVSGVKAEGLLRGACAALAAAAALLLGLSTQTETVLLVRKKGTVKDVQALWVLAMAAASAAGYHLLQLLKCLYLGRGGGRALAWTCLLLDKACAYATFATTVAAAQACVVALDGAHALQWTKLCNIYTRFCEQVAGSLVLGMLAAVGTAVLSAASARNVFRHYYCSSHSPPAPPPETCDAH.

Over 1–14 (MVAAARVVSGVKAE) the chain is Cytoplasmic. Residues 15–35 (GLLRGACAALAAAAALLLGLS) form a helical membrane-spanning segment. Topologically, residues 36 to 54 (TQTETVLLVRKKGTVKDVQ) are extracellular. The chain crosses the membrane as a helical span at residues 55–75 (ALWVLAMAAASAAGYHLLQLL). The Cytoplasmic portion of the chain corresponds to 76 to 97 (KCLYLGRGGGRALAWTCLLLDK). A helical membrane pass occupies residues 98 to 118 (ACAYATFATTVAAAQACVVAL). Topologically, residues 119–139 (DGAHALQWTKLCNIYTRFCEQ) are extracellular. Residues 140-160 (VAGSLVLGMLAAVGTAVLSAA) traverse the membrane as a helical segment. Residues 161–187 (SARNVFRHYYCSSHSPPAPPPETCDAH) are Cytoplasmic-facing.

The protein belongs to the Casparian strip membrane proteins (CASP) family. As to quaternary structure, homodimer and heterodimers.

It is found in the cell membrane. The polypeptide is CASP-like protein 2C1 (Zea mays (Maize)).